The sequence spans 307 residues: N-myc-interactor (307 aa).

A disordered region spans residues Met1–Glu24. Ser16 bears the Phosphoserine mark. Lys22 is covalently cross-linked (Glycyl lysine isopeptide (Lys-Gly) (interchain with G-Cter in ubiquitin)). Residues Ile30–Ile64 are a coiled coil. NID domains follow at residues Gly103–Asp192 and Gly201–Val292.

The protein belongs to the NMI family. As to quaternary structure, interacts with MYCN and MYC, as well as with other transcription factors with a Zip, HLH or a HLH-Zip motif. Interacts with all STAT proteins except STAT2. Interacts with IRF7, the interaction is direct and leads to the inhibition of IRF7-mediated type I IFN production. Interacts (via coiled-coil domain) with TRIM21 (via the SPRY domain); the interaction leads to 'Lys-63'-linked ubiquitination of NMI. Interacts with IFI35; the interaction is direct and is facilitated by TRIM21. Interacts with TLR4; the interaction is direct and leads to NF-kappa-B activation. In terms of assembly, (Microbial infection) Interacts with human cytomegalovirus protein UL23; this interaction inhibits NMI-mediated transcription of interferon-gamma stimulated genes. In terms of processing, ubiquitinated. 'Lys-63'-linked ubiquitination by TRIM21 promotes interaction with IFI35 and inhibits virus-triggered type I IFN-beta production. As to expression, expressed in adult spleen, liver, and kidney. Expressed in fetal thymus, liver, placenta, spleen, lung, and kidney but not brain. Expressed in macrophages.

It is found in the cytoplasm. The protein resides in the nucleus. Its subcellular location is the secreted. Its function is as follows. Acts as a signaling pathway regulator involved in innate immune system response. In response to interleukin 2/IL2 and interferon IFN-gamma/IFNG, interacts with signal transducer and activator of transcription/STAT which activate the transcription of downstream genes involved in a multitude of signals for development and homeostasis. Enhances the recruitment of CBP/p300 coactivators to STAT1 and STAT5, resulting in increased STAT1- and STAT5-dependent transcription. In response to interferon IFN-alpha, associates in a complex with signaling pathway regulator IFI35 to regulate immune response; the complex formation prevents proteasome-mediated degradation of IFI35. In complex with IFI35, inhibits virus-triggered type I IFN-beta production when ubiquitinated by ubiquitin-protein ligase TRIM21. In complex with IFI35, negatively regulates nuclear factor NF-kappa-B signaling by inhibiting the nuclear translocation, activation and transcription of NF-kappa-B subunit p65/RELA, resulting in the inhibition of endothelial cell proliferation, migration and re-endothelialization of injured arteries. Negatively regulates virus-triggered type I interferon/IFN production by inducing proteosome-dependent degradation of IRF7, a transcriptional regulator of type I IFN, thereby interfering with cellular antiviral responses. Beside its role as an intracellular signaling pathway regulator, also functions extracellularly as damage-associated molecular patterns (DAMPs) to promote inflammation, when actively released by macrophage to the extracellular space during cell injury or pathogen invasion. Macrophage-secreted NMI activates NF-kappa-B signaling in adjacent macrophages through Toll-like receptor 4/TLR4 binding and activation, thereby inducing NF-kappa-B translocation from the cytoplasm into the nucleus which promotes the release of pro-inflammatory cytokines. This Homo sapiens (Human) protein is N-myc-interactor.